The sequence spans 376 residues: Queuine tRNA-ribosyltransferase (376 aa).

D89 (proton acceptor) is an active-site residue. Substrate-binding positions include 89-93 (DSGGF), D143, Q194, and G221. The RNA binding stretch occupies residues 252–258 (GVGIPSN). D271 (nucleophile) is an active-site residue. An RNA binding; important for wobble base 34 recognition region spans residues 276–280 (ARNGR). Residues C309, C311, C314, and H340 each contribute to the Zn(2+) site.

Belongs to the queuine tRNA-ribosyltransferase family. As to quaternary structure, homodimer. Within each dimer, one monomer is responsible for RNA recognition and catalysis, while the other monomer binds to the replacement base PreQ1. Requires Zn(2+) as cofactor.

It carries out the reaction 7-aminomethyl-7-carbaguanine + guanosine(34) in tRNA = 7-aminomethyl-7-carbaguanosine(34) in tRNA + guanine. The protein operates within tRNA modification; tRNA-queuosine biosynthesis. In terms of biological role, catalyzes the base-exchange of a guanine (G) residue with the queuine precursor 7-aminomethyl-7-deazaguanine (PreQ1) at position 34 (anticodon wobble position) in tRNAs with GU(N) anticodons (tRNA-Asp, -Asn, -His and -Tyr). Catalysis occurs through a double-displacement mechanism. The nucleophile active site attacks the C1' of nucleotide 34 to detach the guanine base from the RNA, forming a covalent enzyme-RNA intermediate. The proton acceptor active site deprotonates the incoming PreQ1, allowing a nucleophilic attack on the C1' of the ribose to form the product. After dissociation, two additional enzymatic reactions on the tRNA convert PreQ1 to queuine (Q), resulting in the hypermodified nucleoside queuosine (7-(((4,5-cis-dihydroxy-2-cyclopenten-1-yl)amino)methyl)-7-deazaguanosine). This Clostridium botulinum (strain Kyoto / Type A2) protein is Queuine tRNA-ribosyltransferase.